Reading from the N-terminus, the 310-residue chain is Malate dehydrogenase (310 aa).

NAD(+)-binding positions include 7–13 (GAAGGIG) and aspartate 34. Substrate-binding residues include arginine 81 and arginine 87. Residues asparagine 94 and 117 to 119 (ITN) each bind NAD(+). Residues asparagine 119 and arginine 153 each contribute to the substrate site. Histidine 177 serves as the catalytic Proton acceptor. Methionine 227 provides a ligand contact to NAD(+).

The protein belongs to the LDH/MDH superfamily. MDH type 1 family. As to quaternary structure, homodimer.

The catalysed reaction is (S)-malate + NAD(+) = oxaloacetate + NADH + H(+). In terms of biological role, catalyzes the reversible oxidation of malate to oxaloacetate. The polypeptide is Malate dehydrogenase (Pseudoalteromonas translucida (strain TAC 125)).